The primary structure comprises 124 residues: uncharacterized protein (124 aa).

It is found in the cytoplasm. The protein resides in the nucleus. This is an uncharacterized protein from Schizosaccharomyces pombe (strain 972 / ATCC 24843) (Fission yeast).